Consider the following 404-residue polypeptide: Glucose-1-phosphate adenylyltransferase (404 aa).

Residues Y99, G164, 179-180, and S197 each bind alpha-D-glucose 1-phosphate; that span reads EK.

The protein belongs to the bacterial/plant glucose-1-phosphate adenylyltransferase family.

It catalyses the reaction alpha-D-glucose 1-phosphate + ATP + H(+) = ADP-alpha-D-glucose + diphosphate. The protein operates within capsule biogenesis; capsule polysaccharide biosynthesis. It participates in glycan biosynthesis; glycogen biosynthesis. In terms of biological role, involved in the biosynthesis of ADP-glucose, a building block, required in the biosynthesis of maltose-1-phosphate (M1P) and in the elongation reactions to produce linear alpha-1,4-glucans. Catalyzes the reaction between ATP and alpha-D-glucose 1-phosphate (G1P) to produce pyrophosphate and ADP-Glc. In Mycobacteroides abscessus (strain ATCC 19977 / DSM 44196 / CCUG 20993 / CIP 104536 / JCM 13569 / NCTC 13031 / TMC 1543 / L948) (Mycobacterium abscessus), this protein is Glucose-1-phosphate adenylyltransferase.